The primary structure comprises 622 residues: Apical membrane antigen 1 (622 aa).

The signal sequence occupies residues 1–24; sequence MRKLYCVLLLSAFEFTYMINFGRG. At 25–546 the chain is on the extracellular side; sequence QNYWEHPYQK…EHKPTYDKMK (522 aa). Disulfide bonds link C149–C302, C217–C247, C263–C275, C320–C418, and C337–C409. Residue N162 is glycosylated (N-linked (GlcNAc...) asparagine). N-linked (GlcNAc...) asparagine glycosylation is found at N286, N371, N421, N422, and N499. Intrachain disulfides connect C443-C502, C490-C507, and C492-C509. Residues 547–567 form a helical membrane-spanning segment; that stretch reads IIIASSAAVAVLATILMVYLY. Residues 568 to 622 lie on the Cytoplasmic side of the membrane; the sequence is KRKGNAEKYDKMDEPQHYGKSNSRNDEMLDPEASFWGEEKRASHTTPVLMEKPYY. Residues 578-594 show a composition bias toward basic and acidic residues; it reads KMDEPQHYGKSNSRNDE. Positions 578–607 are disordered; that stretch reads KMDEPQHYGKSNSRNDEMLDPEASFWGEEK.

This sequence belongs to the apicomplexan parasites AMA1 family.

Its subcellular location is the membrane. In terms of biological role, involved in parasite invasion of erythrocytes. This is Apical membrane antigen 1 (AMA-1) from Plasmodium falciparum (isolate FC27 / Papua New Guinea).